Consider the following 210-residue polypeptide: Peptidyl-tRNA hydrolase (210 aa).

Y14 lines the tRNA pocket. H19 (proton acceptor) is an active-site residue. TRNA is bound by residues F64, N66, and N112.

The protein belongs to the PTH family. Monomer.

It localises to the cytoplasm. It catalyses the reaction an N-acyl-L-alpha-aminoacyl-tRNA + H2O = an N-acyl-L-amino acid + a tRNA + H(+). In terms of biological role, hydrolyzes ribosome-free peptidyl-tRNAs (with 1 or more amino acids incorporated), which drop off the ribosome during protein synthesis, or as a result of ribosome stalling. Functionally, catalyzes the release of premature peptidyl moieties from peptidyl-tRNA molecules trapped in stalled 50S ribosomal subunits, and thus maintains levels of free tRNAs and 50S ribosomes. This chain is Peptidyl-tRNA hydrolase, found in Methylorubrum extorquens (strain CM4 / NCIMB 13688) (Methylobacterium extorquens).